A 1049-amino-acid chain; its full sequence is Bifunctional cytochrome P450/NADPH--P450 reductase (1049 aa).

A cytochrome P450 region spans residues 2 to 472 (TIKEMPQPKT…STEQSAKKVR (471 aa)). Y52 contributes to the (9Z)-hexadecenoate binding site. Position 401 (C401) interacts with heme. Residues 473 to 1049 (KKAENAHNTP…GRYAKDVWAG (577 aa)) are NADPH--P450 reductase. Residues 483-622 (LLVLYGSNMG…TYEEWREHMW (140 aa)) enclose the Flavodoxin-like domain. FMN is bound by residues 489 to 494 (SNMGTA), 536 to 539 (SYNG), 570 to 572 (CGD), and 578 to 580 (TYQ). Residues 660-892 (HGAFSTNVVA…STPQSEFTLP (233 aa)) enclose the FAD-binding FR-type domain.

It in the N-terminal section; belongs to the cytochrome P450 family. It depends on FAD as a cofactor. The cofactor is FMN. Requires heme as cofactor.

It is found in the cytoplasm. The catalysed reaction is 2 oxidized [cytochrome P450] + NADPH = 2 reduced [cytochrome P450] + NADP(+) + H(+). The enzyme catalyses an organic molecule + reduced [NADPH--hemoprotein reductase] + O2 = an alcohol + oxidized [NADPH--hemoprotein reductase] + H2O + H(+). With respect to regulation, inhibited by N-(12-imidazolyl-dodecanoyl)-L-leucine. Its function is as follows. Functions as a fatty acid monooxygenase. Catalyzes hydroxylation of fatty acids at omega-1, omega-2 and omega-3 positions. Shows activity toward medium and long-chain fatty acids, with optimum chain lengths of 12, 14 and 16 carbons (lauric, myristic, and palmitic acids). Able to metabolize some of these primary metabolites to secondary and tertiary products. Marginal activity towards short chain lengths of 8-10 carbons. Hydroxylates highly branched fatty acids, which play an essential role in membrane fluidity regulation. Also displays a NADPH-dependent reductase activity in the C-terminal domain, which allows electron transfer from NADPH to the heme iron of the cytochrome P450 N-terminal domain. Involved in inactivation of quorum sensing signals of other competing bacteria by oxidazing efficiently acyl homoserine lactones (AHLs), molecules involved in quorum sensing signaling pathways, and their lactonolysis products acyl homoserines (AHs). This Priestia megaterium (strain ATCC 14581 / DSM 32 / CCUG 1817 / JCM 2506 / NBRC 15308 / NCIMB 9376 / NCTC 10342 / NRRL B-14308 / VKM B-512 / Ford 19) (Bacillus megaterium) protein is Bifunctional cytochrome P450/NADPH--P450 reductase.